The primary structure comprises 528 residues: Poly(A) RNA polymerase GLD2 (528 aa).

2 disordered regions span residues 1–41 and 99–121; these read MYPN…QPQQ and RDQSPLISPASPSSSFQNRKRRS. Low complexity-rich tracts occupy residues 16 to 32 and 102 to 113; these read PCEQQQPPLEQSQEQPL and SPLISPASPSSS. Positions 259 and 261 each coordinate Mg(2+). The PAP-associated domain occupies 428 to 481; it reads LGDLLLGFLKYFAIEFDWSKDIISVREAKALPRSDDYEWRNKFICVEEPYDRTN.

It belongs to the DNA polymerase type-B-like family. GLD2 subfamily. In terms of assembly, component of a complex at least composed of cpeb1, cpsf1, tent2/gld2, pabpc1/ePAB, parn and sympk. Following oocyte maturation, parn is expelled from the complex. Interacts with rbm9 and sympk. Mg(2+) is required as a cofactor. Requires Mn(2+) as cofactor.

The protein localises to the cytoplasm. It carries out the reaction RNA(n) + ATP = RNA(n)-3'-adenine ribonucleotide + diphosphate. Functionally, cytoplasmic poly(A) RNA polymerase that adds successive AMP monomers to the 3'-end of specific RNAs, forming a poly(A) tail. In contrast to the canonical nuclear poly(A) RNA polymerase, it only adds poly(A) to selected cytoplasmic mRNAs during oocyte maturation. Plays a central role during oocyte maturation by mediating polyadenylation of dormant mRNAs, which contain 5'AAUAAA-3' sequence in their 3'-UTR. In immature oocytes, polyadenylation of poly(A) tails is counteracted by the ribonuclease parn. During maturation parn is excluded from the ribonucleoprotein complex, allowing poly(A) elongation and activation of mRNAs. May not play a role in replication-dependent histone mRNA degradation. The sequence is that of Poly(A) RNA polymerase GLD2 (tent2) from Xenopus tropicalis (Western clawed frog).